Here is a 428-residue protein sequence, read N- to C-terminus: Glutamate-1-semialdehyde 2,1-aminomutase (428 aa).

Lys265 is subject to N6-(pyridoxal phosphate)lysine.

This sequence belongs to the class-III pyridoxal-phosphate-dependent aminotransferase family. HemL subfamily. In terms of assembly, homodimer. It depends on pyridoxal 5'-phosphate as a cofactor.

It localises to the cytoplasm. The catalysed reaction is (S)-4-amino-5-oxopentanoate = 5-aminolevulinate. It participates in porphyrin-containing compound metabolism; protoporphyrin-IX biosynthesis; 5-aminolevulinate from L-glutamyl-tRNA(Glu): step 2/2. In Proteus mirabilis (strain HI4320), this protein is Glutamate-1-semialdehyde 2,1-aminomutase.